A 3753-amino-acid polypeptide reads, in one-letter code: Intermembrane lipid transfer protein VPS13C (3753 aa).

The region spanning L3–S116 is the Chorein N-terminal domain. S132 carries the post-translational modification Phosphoserine. Residues G150 to F164 are compositionally biased toward basic residues. The tract at residues G150 to E176 is disordered. Residues K165–E176 are compositionally biased toward basic and acidic residues. T614 is modified (phosphothreonine). Position 619 is a phosphoserine (S619). T624 is modified (phosphothreonine). Residues S737, S842, S872, and S874 each carry the phosphoserine modification. The short motif at E877–D883 is the FFAT element. 2 positions are modified to phosphoserine: S1979 and S2473. Residues D2415–A3309 are required for late endosome/lysosome localization. Positions L2766–G3016 constitute an SHR-BD domain. The segment at E3310 to S3753 is required for lipid droplet localization. R3519 and R3526 each carry omega-N-methylarginine. The residue at position 3538 (K3538) is an N6-acetyllysine. A Phosphoserine modification is found at S3641.

The protein belongs to the VPS13 family. In terms of tissue distribution, widely expressed.

It is found in the mitochondrion outer membrane. It localises to the lipid droplet. The protein localises to the endoplasmic reticulum membrane. The protein resides in the lysosome membrane. Its subcellular location is the late endosome membrane. Its function is as follows. Mediates the transfer of lipids between membranes at organelle contact sites. Necessary for proper mitochondrial function and maintenance of mitochondrial transmembrane potential. Involved in the regulation of PINK1/PRKN-mediated mitophagy in response to mitochondrial depolarization. This is Intermembrane lipid transfer protein VPS13C from Homo sapiens (Human).